The sequence spans 85 residues: Hepcidin (85 aa).

An N-terminal signal peptide occupies residues 1–24 (MKTFSVAVAVAVVLAFICLQESSA). The propeptide occupies 25-64 (VPANEEQELEQQIYFADPEMPVESCKMPYYMRENRQGSPA). 4 disulfide bridges follow: cysteine 66/cysteine 83, cysteine 69/cysteine 72, cysteine 70/cysteine 79, and cysteine 73/cysteine 82.

As to quaternary structure, monomer. Expressed in all tissues tested, with highest levels of expression in kidney and lowest levels in liver. Intra-peritoneal injection of lipopolysaccharide results in increased expression in heart, spleen and stomach, but not in kidney or liver.

Its subcellular location is the secreted. Its function is as follows. Seems to act as a signaling molecule involved in the maintenance of iron homeostasis. Seems to be required in conjunction with HFE to regulate both intestinal iron absorption and iron storage in macrophages. Functionally, has very strong antibacterial activity against the marine Gram-negative bacteria V.alginolyticus (MIC=24 uM), V.fluvialis, V.harveyis (MIC=12 uM) and V.parahaemolyticus (MIC=6 uM). Has antibacterial activity against the Gram-negative bacteria A.hydrophila (MIC=6 uM), E.coli (MIC=24 uM), and E.coli BL21(DE3)plysS (MIC=6 uM), and the Gram-positive bacteria B.cereus (MIC=24 uM), B.subtilis (MIC=6 uM), C.glutamicum (MIC=3 uM), M.luteus (MIC=3 uM), M.lysodeikticus, S.aureus (MIC=6 uM) and S.epidermis (MIC=12 uM). Possesses antifungal activity against A.niger (MIC=24 uM), F.graminearum (MIC24 uM) and F.solani (MIC=24 uM), but lacks antifungal activity against the yeasts P.pastoris GS115 and C.albicans. The protein is Hepcidin of Larimichthys crocea (Large yellow croaker).